The sequence spans 376 residues: Mitogen-activated protein kinase 6 (376 aa).

The Protein kinase domain maps to A43 to L329. ATP contacts are provided by residues I49 to V57 and K72. The active-site Proton acceptor is the D169. A Phosphothreonine modification is found at T201. The TXY signature appears at T201 to Y203. At Y203 the chain carries Phosphotyrosine.

The protein belongs to the protein kinase superfamily. CMGC Ser/Thr protein kinase family. MAP kinase subfamily. Dually phosphorylated on Thr-201 and Tyr-203, which activates the enzyme.

The catalysed reaction is L-seryl-[protein] + ATP = O-phospho-L-seryl-[protein] + ADP + H(+). It carries out the reaction L-threonyl-[protein] + ATP = O-phospho-L-threonyl-[protein] + ADP + H(+). Its activity is regulated as follows. Activated by threonine and tyrosine phosphorylation. This is Mitogen-activated protein kinase 6 (MPK6) from Oryza sativa subsp. japonica (Rice).